A 521-amino-acid polypeptide reads, in one-letter code: Glutamate--cysteine ligase (521 aa).

Belongs to the glutamate--cysteine ligase type 1 family. Type 1 subfamily.

It carries out the reaction L-cysteine + L-glutamate + ATP = gamma-L-glutamyl-L-cysteine + ADP + phosphate + H(+). Its pathway is sulfur metabolism; glutathione biosynthesis; glutathione from L-cysteine and L-glutamate: step 1/2. In Buchnera aphidicola subsp. Baizongia pistaciae (strain Bp), this protein is Glutamate--cysteine ligase (gshA).